We begin with the raw amino-acid sequence, 328 residues long: Malate dehydrogenase (328 aa).

Residue 12-18 (GAAGQIA) participates in NAD(+) binding. Residues Arg-93 and Arg-99 each contribute to the substrate site. Residues Asn-106, Gln-113, and 130–132 (VGN) each bind NAD(+). Substrate contacts are provided by Asn-132 and Arg-163. The active-site Proton acceptor is His-188.

The protein belongs to the LDH/MDH superfamily. MDH type 2 family.

It carries out the reaction (S)-malate + NAD(+) = oxaloacetate + NADH + H(+). Catalyzes the reversible oxidation of malate to oxaloacetate. This is Malate dehydrogenase from Burkholderia multivorans (strain ATCC 17616 / 249).